Consider the following 502-residue polypeptide: Probable cytosol aminopeptidase (502 aa).

Residues Lys-269 and Asp-274 each coordinate Mn(2+). Lys-281 is a catalytic residue. Mn(2+) contacts are provided by Asp-292, Asp-351, and Glu-353. The active site involves Arg-355.

It belongs to the peptidase M17 family. It depends on Mn(2+) as a cofactor.

Its subcellular location is the cytoplasm. It catalyses the reaction Release of an N-terminal amino acid, Xaa-|-Yaa-, in which Xaa is preferably Leu, but may be other amino acids including Pro although not Arg or Lys, and Yaa may be Pro. Amino acid amides and methyl esters are also readily hydrolyzed, but rates on arylamides are exceedingly low.. It carries out the reaction Release of an N-terminal amino acid, preferentially leucine, but not glutamic or aspartic acids.. Functionally, presumably involved in the processing and regular turnover of intracellular proteins. Catalyzes the removal of unsubstituted N-terminal amino acids from various peptides. The sequence is that of Probable cytosol aminopeptidase from Aliivibrio fischeri (strain MJ11) (Vibrio fischeri).